Here is a 663-residue protein sequence, read N- to C-terminus: UvrABC system protein B (663 aa).

The Helicase ATP-binding domain maps to 30–417; that stretch reads EGIKAGKRHQ…TDKMVEQIIR (388 aa). ATP is bound at residue 43–50; the sequence is GATGTGKT. Positions 96 to 119 match the Beta-hairpin motif; sequence YYDYYQPEAYVPSTDTFIEKDASI. Residues 434-600 enclose the Helicase C-terminal domain; the sequence is QIDDLLSEIQ…TINKKIHDLI (167 aa). The UVR domain occupies 627–662; it reads QKTIDNIEKEMKQAAKDLDFEKATELRDMLFELKAE.

This sequence belongs to the UvrB family. Forms a heterotetramer with UvrA during the search for lesions. Interacts with UvrC in an incision complex.

It localises to the cytoplasm. In terms of biological role, the UvrABC repair system catalyzes the recognition and processing of DNA lesions. A damage recognition complex composed of 2 UvrA and 2 UvrB subunits scans DNA for abnormalities. Upon binding of the UvrA(2)B(2) complex to a putative damaged site, the DNA wraps around one UvrB monomer. DNA wrap is dependent on ATP binding by UvrB and probably causes local melting of the DNA helix, facilitating insertion of UvrB beta-hairpin between the DNA strands. Then UvrB probes one DNA strand for the presence of a lesion. If a lesion is found the UvrA subunits dissociate and the UvrB-DNA preincision complex is formed. This complex is subsequently bound by UvrC and the second UvrB is released. If no lesion is found, the DNA wraps around the other UvrB subunit that will check the other stand for damage. The sequence is that of UvrABC system protein B from Staphylococcus aureus (strain COL).